We begin with the raw amino-acid sequence, 416 residues long: Squamosa promoter-binding-like protein 8 (416 aa).

Residues 11-53 (SSCDDFGYNATPPPPPSLLPIMDQDGGGGSIQRDHHHHHNHQQ) are disordered. The SBP-type zinc finger occupies 182-260 (PPRCQAEGCK…ADHNRRRRKS (79 aa)). Zn(2+) contacts are provided by Cys-185, Cys-190, Cys-207, His-210, Cys-227, Cys-230, His-234, and Cys-246. Residues 243–259 (KKSCRKRLADHNRRRRK) carry the Bipartite nuclear localization signal motif. The tract at residues 250 to 299 (LADHNRRRRKSKPSDGEHSGEKRRAQANKSAATKDKAGSSSKNAGIGDGF) is disordered. The segment covering 261-273 (KPSDGEHSGEKRR) has biased composition (basic and acidic residues).

Expressed in stems, leaf sheaths, and young panicles.

Its subcellular location is the nucleus. Probable transcription factor that plays an important role in building the laminar joint between leaf blade and leaf sheath boundary, thereby controlling ligule and auricle development. This is Squamosa promoter-binding-like protein 8 (SPL8) from Oryza sativa subsp. indica (Rice).